We begin with the raw amino-acid sequence, 97 residues long: Kininogen-1 (97 aa).

Positions 1–23 (MRLWFCLSFLIILCVEHFPGTLA) are cleaved as a signal peptide.

This sequence belongs to the bradykinin-related peptide family. Expressed by the skin glands.

Its subcellular location is the secreted. Functionally, [Ala3,Thr6]bradykinin: produces in vitro relaxation of rat arterial smooth muscle and constriction of intestinal smooth muscle. Possesses insulin-releasing activity. May target bradykinin receptors (BDKRB). This Bombina variegata (Yellow-bellied toad) protein is Kininogen-1.